Reading from the N-terminus, the 381-residue chain is Magnesium transporter MRS2-I (381 aa).

2 helical membrane-spanning segments follow: residues 316 to 336 (LFLS…GIFG) and 353 to 373 (WVVL…VAYA). A Required for magnesium transport activity motif is present at residues 336 to 338 (GMN).

It belongs to the CorA metal ion transporter (MIT) (TC 1.A.35.5) family.

The protein resides in the membrane. Magnesium transporter that may mediate the influx of magnesium. The sequence is that of Magnesium transporter MRS2-I (MRS2-I) from Oryza sativa subsp. indica (Rice).